The following is an 801-amino-acid chain: Ferredoxin:CoB-CoM heterodisulfide reductase subunit A (801 aa).

149–172 lines the FAD pocket; it reads GGGIAGITAALNLADNGVSTVLVE. 4Fe-4S ferredoxin-type domains follow at residues 239–269 and 285–320; these read KKPRYVKDSCTACGRCSRVCPVQVEDEFNCG and PKIYCIDPDYCLQLNGEACGKCADACKNEAIDFSQK. [4Fe-4S] cluster contacts are provided by cysteine 248, cysteine 251, cysteine 254, cysteine 258, cysteine 295, cysteine 303, cysteine 306, and cysteine 310. A disordered region spans residues 382–409; that stretch reads FSKASSDPTPATCDSRCEDSSDESQGTD. 2 4Fe-4S ferredoxin-type domains span residues 606 to 634 and 635 to 664; these read EIATINQLLCTRCGECLKCPFDALSVNES and GRVVLDPLICTGCGYCTKLCGEGAVQIAGF. Residues cysteine 615, cysteine 618, cysteine 621, cysteine 624, cysteine 644, cysteine 647, cysteine 650, and cysteine 654 each contribute to the [4Fe-4S] cluster site.

This sequence belongs to the HdrA family. In terms of assembly, the ferredoxin:CoB-CoM heterodisulfide reductase is composed of three subunits; HdrA1, HdrB1 and HdrC1. [4Fe-4S] cluster serves as cofactor. The cofactor is FAD.

It localises to the cytoplasm. The catalysed reaction is coenzyme B + coenzyme M + 2 oxidized [2Fe-2S]-[ferredoxin] = coenzyme M-coenzyme B heterodisulfide + 2 reduced [2Fe-2S]-[ferredoxin] + 2 H(+). It participates in cofactor metabolism; coenzyme M-coenzyme B heterodisulfide reduction; coenzyme B and coenzyme M from coenzyme M-coenzyme B heterodisulfide: step 1/1. Its function is as follows. Part of a complex that catalyzes the reversible reduction of CoM-S-S-CoB to the thiol-coenzymes H-S-CoM (coenzyme M) and H-S-CoB (coenzyme B). Probably involved in methylotrophic methanogenesis but not in aceticlastic methanogenesis. The protein is Ferredoxin:CoB-CoM heterodisulfide reductase subunit A of Methanosarcina acetivorans (strain ATCC 35395 / DSM 2834 / JCM 12185 / C2A).